A 458-amino-acid polypeptide reads, in one-letter code: 3-isopropylmalate dehydratase large subunit (458 aa).

[4Fe-4S] cluster-binding residues include cysteine 337, cysteine 397, and cysteine 400.

Belongs to the aconitase/IPM isomerase family. LeuC type 1 subfamily. In terms of assembly, heterodimer of LeuC and LeuD. It depends on [4Fe-4S] cluster as a cofactor.

It carries out the reaction (2R,3S)-3-isopropylmalate = (2S)-2-isopropylmalate. It functions in the pathway amino-acid biosynthesis; L-leucine biosynthesis; L-leucine from 3-methyl-2-oxobutanoate: step 2/4. Its function is as follows. Catalyzes the isomerization between 2-isopropylmalate and 3-isopropylmalate, via the formation of 2-isopropylmaleate. This chain is 3-isopropylmalate dehydratase large subunit, found in Leuconostoc mesenteroides subsp. mesenteroides (strain ATCC 8293 / DSM 20343 / BCRC 11652 / CCM 1803 / JCM 6124 / NCDO 523 / NBRC 100496 / NCIMB 8023 / NCTC 12954 / NRRL B-1118 / 37Y).